The chain runs to 162 residues: Interleukin-15 (162 aa).

Positions 1-29 (MRISKPHLRITSIQCYVCLLLNTHFLTEA) are cleaved as a signal peptide. A propeptide spanning residues 30–48 (GIRVFILGCISAGIPKTEA) is cleaved from the precursor. 2 disulfides stabilise this stretch: cysteine 83–cysteine 133 and cysteine 90–cysteine 136. N-linked (GlcNAc...) asparagine glycans are attached at residues asparagine 119, asparagine 127, and asparagine 143.

This sequence belongs to the IL-15/IL-21 family.

The protein localises to the secreted. Cytokine that plays a major role in the development of inflammatory and protective immune responses to microbial invaders and parasites by modulating immune cells of both the innate and adaptive immune systems. Stimulates the proliferation of natural killer cells, T-cells and B-cells and promotes the secretion of several cytokines. In monocytes, induces the production of IL8 and monocyte chemotactic protein 1/CCL2, two chemokines that attract neutrophils and monocytes respectively to sites of infection. Unlike most cytokines, which are secreted in soluble form, IL15 is expressed in association with its high affinity IL15RA on the surface of IL15-producing cells and delivers signals to target cells that express IL2RB and IL2RG receptor subunits. Binding to its receptor triggers the phosphorylation of JAK1 and JAK3 and the recruitment and subsequent phosphorylation of signal transducer and activator of transcription-3/STAT3 and STAT5. In mast cells, induces the rapid tyrosine phosphorylation of STAT6 and thereby controls mast cell survival and release of cytokines such as IL4. The polypeptide is Interleukin-15 (IL15) (Marmota monax (Woodchuck)).